Here is a 135-residue protein sequence, read N- to C-terminus: Mu-like prophage FluMu protein gp46 (135 aa).

The protein to phage Mu protein gp46.

This Haemophilus influenzae (strain ATCC 51907 / DSM 11121 / KW20 / Rd) protein is Mu-like prophage FluMu protein gp46.